Consider the following 522-residue polypeptide: Signal transduction histidine-protein kinase/phosphatase MprB (522 aa).

The Cytoplasmic segment spans residues 1–30 (MIRLYRPQRPPLRAPLRATPSLSLRWRVML). The helical transmembrane segment at 31–51 (LAMSMVAMVVVLMAFAVYAVI) threads the bilayer. Residues 52–167 (SAALYSDIDN…PTEAVMNKLR (116 aa)) lie on the Extracellular side of the membrane. The chain crosses the membrane as a helical span at residues 168–188 (WVLLIVGGVGVAVAAVAGGMV). Over 189–522 (TRAGLRPVAR…SVDSQSARAR (334 aa)) the chain is Cytoplasmic. Residues 190–242 (RAGLRPVARLTEAAERVARTDDLRPIPVFGSDELARLTESFNLMLRALAESRE) form the HAMP domain. A Histidine kinase domain is found at 250-470 (DAGHELRTPL…SFYVLLPGRS (221 aa)). His-253 carries the post-translational modification Phosphohistidine; by autocatalysis. The tract at residues 467 to 522 (PGRSLPPAGHSTPAGESETDQAEAATDPAVPVAGDTANSRESANVISVDSQSARAR) is disordered. Polar residues predominate over residues 502-522 (TANSRESANVISVDSQSARAR).

Requires Mg(2+) as cofactor. Mn(2+) is required as a cofactor. In terms of processing, autophosphorylated.

It is found in the cell membrane. It catalyses the reaction ATP + protein L-histidine = ADP + protein N-phospho-L-histidine.. Its function is as follows. Member of the two-component regulatory system MprB/MprA which contributes to maintaining a balance among several systems involved in stress resistance and is required for establishment and maintenance of persistent infection in the host. In response to environmental signals MprB acts both as a membrane-associated protein kinase that undergoes autophosphorylation and subsequently transfers the phosphate to MprA, and a protein phosphatase that dephosphorylates phospho-MprA. The polypeptide is Signal transduction histidine-protein kinase/phosphatase MprB (mprB) (Mycolicibacterium paratuberculosis (strain ATCC BAA-968 / K-10) (Mycobacterium paratuberculosis)).